A 220-amino-acid chain; its full sequence is Iron-sulfur cluster repair protein YtfE (220 aa).

Belongs to the RIC family. YtfE subfamily. In terms of assembly, homodimer.

It is found in the cytoplasm. Di-iron-containing protein involved in the repair of iron-sulfur clusters damaged by oxidative and nitrosative stress conditions. This Escherichia coli O6:K15:H31 (strain 536 / UPEC) protein is Iron-sulfur cluster repair protein YtfE.